Here is a 675-residue protein sequence, read N- to C-terminus: Protein PALS1 (675 aa).

2 disordered regions span residues 1 to 32 and 52 to 79; these read MTTSYMNGHVTEESDSGIKNLGLASPEEHPKH and RSAQLERIRQQQEDMRRRREEEGKKQEL. The tract at residues 1–345 is required for the correct localization of PALS1 and PATJ at cell-cell contacts and the normal formation of tight junctions and adherens junctions; the sequence is MTTSYMNGHV…QQIKPPPAKE (345 aa). 2 positions are modified to phosphoserine: Ser-14 and Ser-25. Residues 21–140 form an interaction with PARD6B region; the sequence is LGLASPEEHP…LKHIQHTLVD (120 aa). Residues 54–79 show a composition bias toward basic and acidic residues; it reads AQLERIRQQQEDMRRRREEEGKKQEL. Residues Ser-83 and Ser-84 each carry the phosphoserine modification. L27 domains follow at residues 120–177 and 179–235; these read KILE…NKAS and PFPL…MQLE. The interaction with LIN7C stretch occupies residues 181-243; sequence PLIANVQDLV…LEPITDERVY (63 aa). One can recognise a PDZ domain in the interval 256–336; that stretch reads IVRIEKARDI…TLTFVLIPSQ (81 aa). The region spanning 345–417 is the SH3 domain; the sequence is ETVIHVKAHF…PGKSFQQQRE (73 aa). The Guanylate kinase-like domain occupies 479–660; it reads KRPIILIGPQ…AYQELLRLIN (182 aa). ATP is bound at residue 486–493; the sequence is GPQNCGQN.

Belongs to the MAGUK family. Heterodimer with MPP1. Forms a heterotrimeric complex composed of PALS1, LIN7B and PATJ; the N-terminal L27 domain of PALS1 interacts with the L27 domain of PATJ and the C-terminal L27 domain of PALS1 interacts with the L27 domain of LIN7B. Component of a complex composed of PALS1, CRB1 and MPP4. Component of a complex whose core is composed of ARHGAP17, AMOT, PALS1, PATJ and PARD3/PAR3. Component of a complex composed of PALS1, CRB1 and EPB41L5. Within the complex, interacts (via HOOK domain) with EPB41L5 (via FERM domain), and interacts with CRB1 (via intracellular domain). Component of a complex composed of PALS1, MPP3 and CRB1; PALS1 acts as a bridging protein between MPP3 (via guanylate kinase-like domain) and CRB1. Component of a complex composed of CRB3, PALS1 and PATJ. As part of the Crumbs complex; interacts with WWP1, the interaction is enhanced by AMOTL2 and facilitates WWP1 localization to the plasma membrane. The Crumbs complex promotes monoubiquitination of AMOTL2 by WWP1, which activates the Hippo signaling pathway. Interacts (via PDZ domain) with PATJ (via N-terminus). Interacts with EZR. Interacts (via PDZ domain) with CRB1 (via C-terminal ERLI motif). While the PDZ domain is sufficient for interaction with CRB1, the adjacent SH3 and guanylate kinase-like domains are likely to contribute to a high affinity interaction. Interacts with WWTR1/TAZ (via WW domain). Interacts with MPP7. Interacts (via PDZ domain) with CRB3 (via C-terminus). Interacts with LIN7C. Interacts with MPDZ. Interacts with PARD6B. Interacts with SC6A1. Interacts with CDH5; the interaction promotes PALS1 localization to cell junctions and is required for CDH5-mediated vascular lumen formation and endothelial cell. Interacts with NPHP1 (via coiled coil and SH3 domains). Interacts with NPHP4. Interacts with CRB2.

The protein resides in the golgi apparatus. It localises to the cell membrane. The protein localises to the endomembrane system. It is found in the cell junction. Its subcellular location is the tight junction. The protein resides in the adherens junction. It localises to the cell projection. The protein localises to the axon. It is found in the perikaryon. Its subcellular location is the apical cell membrane. Functionally, plays a role in tight junction biogenesis and in the establishment of cell polarity in epithelial cells. Also involved in adherens junction biogenesis by ensuring correct localization of the exocyst complex protein EXOC4/SEC8 which allows trafficking of adherens junction structural component CDH1 to the cell surface. Plays a role through its interaction with CDH5 in vascular lumen formation and endothelial membrane polarity. Required during embryonic and postnatal retinal development. Required for the maintenance of cerebellar progenitor cells in an undifferentiated proliferative state, preventing premature differentiation, and is required for cerebellar histogenesis, fissure formation, cerebellar layer organization and cortical development. Plays a role in neuronal progenitor cell survival, potentially via promotion of mTOR signaling. Plays a role in the radial and longitudinal extension of the myelin sheath in Schwann cells. May modulate SC6A1/GAT1-mediated GABA uptake by stabilizing the transporter. May play a role in the T-cell receptor-mediated activation of NF-kappa-B. Required for localization of EZR to the apical membrane of parietal cells and may play a role in the dynamic remodeling of the apical cytoskeleton. Required for the normal polarized localization of the vesicular marker STX4. Required for the correct trafficking of the myelin proteins PMP22 and MAG. Involved in promoting phosphorylation and cytoplasmic retention of transcriptional coactivators YAP1 and WWTR1/TAZ which leads to suppression of TGFB1-dependent transcription of target genes such as CCN2/CTGF, SERPINE1/PAI1, SNAI1/SNAIL1 and SMAD7. The sequence is that of Protein PALS1 from Rattus norvegicus (Rat).